The primary structure comprises 215 residues: UPF0502 protein Ping_1905 (215 aa).

Belongs to the UPF0502 family.

This Psychromonas ingrahamii (strain DSM 17664 / CCUG 51855 / 37) protein is UPF0502 protein Ping_1905.